A 347-amino-acid polypeptide reads, in one-letter code: Extracellular metalloprotease (347 aa).

Residues 1 to 20 (MKSRPICSVIPPYILHRIIA) form the signal peptide. Residues 43-68 (SHHPRPEPHEKLPAGQANRSIHDAEQ) are disordered. A Zn(2+)-binding site is contributed by His162. The active site involves Glu163. Zn(2+) is bound by residues His166 and Glu186. His264 (proton donor) is an active-site residue.

It belongs to the peptidase M4 family. Ca(2+) serves as cofactor. It depends on Zn(2+) as a cofactor.

It is found in the secreted. The polypeptide is Extracellular metalloprotease (prt1) (Pectobacterium carotovorum subsp. carotovorum (Erwinia carotovora subsp. carotovora)).